Here is a 196-residue protein sequence, read N- to C-terminus: ATP-dependent Clp protease proteolytic subunit (196 aa).

The Nucleophile role is filled by Ser-96. Residue His-121 is part of the active site.

This sequence belongs to the peptidase S14 family. In terms of assembly, fourteen ClpP subunits assemble into 2 heptameric rings which stack back to back to give a disk-like structure with a central cavity, resembling the structure of eukaryotic proteasomes.

It is found in the cytoplasm. The enzyme catalyses Hydrolysis of proteins to small peptides in the presence of ATP and magnesium. alpha-casein is the usual test substrate. In the absence of ATP, only oligopeptides shorter than five residues are hydrolyzed (such as succinyl-Leu-Tyr-|-NHMec, and Leu-Tyr-Leu-|-Tyr-Trp, in which cleavage of the -Tyr-|-Leu- and -Tyr-|-Trp bonds also occurs).. Cleaves peptides in various proteins in a process that requires ATP hydrolysis. Has a chymotrypsin-like activity. Plays a major role in the degradation of misfolded proteins. The sequence is that of ATP-dependent Clp protease proteolytic subunit from Streptococcus agalactiae serotype III (strain NEM316).